A 491-amino-acid polypeptide reads, in one-letter code: Cytochrome P450 2B9 (491 aa).

Serine 128 is subject to Phosphoserine; by PKA. Cysteine 436 is a heme binding site.

It belongs to the cytochrome P450 family. The cofactor is heme.

The protein resides in the endoplasmic reticulum membrane. It localises to the microsome membrane. The enzyme catalyses an organic molecule + reduced [NADPH--hemoprotein reductase] + O2 = an alcohol + oxidized [NADPH--hemoprotein reductase] + H2O + H(+). In terms of biological role, cytochromes P450 are a group of heme-thiolate monooxygenases. In liver microsomes, this enzyme is involved in an NADPH-dependent electron transport pathway. It oxidizes a variety of structurally unrelated compounds, including steroids, fatty acids, and xenobiotics. This chain is Cytochrome P450 2B9 (Cyp2b9), found in Mus musculus (Mouse).